The primary structure comprises 407 residues: Na(+)-translocating NADH-quinone reductase subunit F (407 aa).

Residues 3–23 traverse the membrane as a helical segment; it reads IILGVVMFTLIVLALVLVILF. A 2Fe-2S ferredoxin-type domain is found at 32-126; it reads GDITISINGD…DMDIELPEEI (95 aa). C69, C75, C78, and C110 together coordinate [2Fe-2S] cluster. Residues 129 to 269 form the FAD-binding FR-type domain; the sequence is VKKWECTVIS…SGPFGEFFAK (141 aa). A catalytic region spans residues 272–389; sequence DAEMVFIGGG…PMMNAAVIGM (118 aa).

It belongs to the NqrF family. Composed of six subunits; NqrA, NqrB, NqrC, NqrD, NqrE and NqrF. Requires [2Fe-2S] cluster as cofactor. The cofactor is FAD.

It localises to the cell inner membrane. It catalyses the reaction a ubiquinone + n Na(+)(in) + NADH + H(+) = a ubiquinol + n Na(+)(out) + NAD(+). NQR complex catalyzes the reduction of ubiquinone-1 to ubiquinol by two successive reactions, coupled with the transport of Na(+) ions from the cytoplasm to the periplasm. The first step is catalyzed by NqrF, which accepts electrons from NADH and reduces ubiquinone-1 to ubisemiquinone by a one-electron transfer pathway. The sequence is that of Na(+)-translocating NADH-quinone reductase subunit F from Vibrio anguillarum (Listonella anguillarum).